We begin with the raw amino-acid sequence, 225 residues long: Phosphoserine phosphatase (225 aa).

The residue at position 1 (M1) is an N-acetylmethionine. D20 functions as the Nucleophile in the catalytic mechanism. Mg(2+) contacts are provided by D20 and D22. 20 to 22 is a binding site for L-serine; the sequence is DVD. The active-site Proton donor is D22. M52 serves as a coordination point for O-phospho-L-serine. G53 contacts phosphate. L-serine is bound by residues 109 to 111 and K158; that span reads SGG. O-phospho-L-serine is bound by residues 109 to 111 and K158; that span reads SGG. D179 serves as a coordination point for Mg(2+). O-phospho-L-serine is bound at residue T182. Residue T182 participates in phosphate binding.

The protein belongs to the HAD-like hydrolase superfamily. SerB family. Homodimer. It depends on Mg(2+) as a cofactor.

The protein resides in the cytoplasm. Its subcellular location is the cytosol. The enzyme catalyses O-phospho-L-serine + H2O = L-serine + phosphate. The catalysed reaction is O-phospho-D-serine + H2O = D-serine + phosphate. It functions in the pathway amino-acid biosynthesis; L-serine biosynthesis; L-serine from 3-phospho-D-glycerate: step 3/3. Its activity is regulated as follows. Inhibited by calcium ions. Catalyzes the last irreversible step in the biosynthesis of L-serine from carbohydrates, the dephosphorylation of O-phospho-L-serine to L-serine. L-serine can then be used in protein synthesis, to produce other amino acids, in nucleotide metabolism or in glutathione synthesis, or can be racemized to D-serine, a neuromodulator. May also act on O-phospho-D-serine. In Homo sapiens (Human), this protein is Phosphoserine phosphatase.